The chain runs to 422 residues: Serine hydroxymethyltransferase (422 aa).

(6S)-5,6,7,8-tetrahydrofolate is bound by residues Leu118 and Gly122–Leu124. Lys227 is modified (N6-(pyridoxal phosphate)lysine). Glu242 provides a ligand contact to (6S)-5,6,7,8-tetrahydrofolate.

It belongs to the SHMT family. As to quaternary structure, homodimer. Requires pyridoxal 5'-phosphate as cofactor.

It is found in the cytoplasm. The catalysed reaction is (6R)-5,10-methylene-5,6,7,8-tetrahydrofolate + glycine + H2O = (6S)-5,6,7,8-tetrahydrofolate + L-serine. It participates in one-carbon metabolism; tetrahydrofolate interconversion. Its pathway is amino-acid biosynthesis; glycine biosynthesis; glycine from L-serine: step 1/1. Its function is as follows. Catalyzes the reversible interconversion of serine and glycine with tetrahydrofolate (THF) serving as the one-carbon carrier. This reaction serves as the major source of one-carbon groups required for the biosynthesis of purines, thymidylate, methionine, and other important biomolecules. Also exhibits THF-independent aldolase activity toward beta-hydroxyamino acids, producing glycine and aldehydes, via a retro-aldol mechanism. The protein is Serine hydroxymethyltransferase of Sulfurihydrogenibium sp. (strain YO3AOP1).